The chain runs to 104 residues: Cell cycle protein GpsB (104 aa).

The stretch at 34-72 (LDVVIQDYEVFQKKIERLEQEIHQLRTEAKRAASERQTR) forms a coiled coil. The span at 60–71 (TEAKRAASERQT) shows a compositional bias: basic and acidic residues. Positions 60-82 (TEAKRAASERQTRHQTSPSVGST) are disordered. Over residues 73 to 82 (HQTSPSVGST) the composition is skewed to polar residues.

The protein belongs to the GpsB family. As to quaternary structure, forms polymers through the coiled coil domains. Interacts with PBP1, MreC and EzrA.

Its subcellular location is the cytoplasm. Its function is as follows. Divisome component that associates with the complex late in its assembly, after the Z-ring is formed, and is dependent on DivIC and PBP2B for its recruitment to the divisome. Together with EzrA, is a key component of the system that regulates PBP1 localization during cell cycle progression. Its main role could be the removal of PBP1 from the cell pole after pole maturation is completed. Also contributes to the recruitment of PBP1 to the division complex. Not essential for septum formation. The protein is Cell cycle protein GpsB of Halalkalibacterium halodurans (strain ATCC BAA-125 / DSM 18197 / FERM 7344 / JCM 9153 / C-125) (Bacillus halodurans).